Here is a 1029-residue protein sequence, read N- to C-terminus: MLFRARGPVRGRGWGRPAEAPRRGRSPPWSPAWICCWALAGCQAAWAGDLPSSSSRPLPPCQEKDYHFEYTECDSSGSRWRVAIPNSAVDCSGLPDPVRGKECTFSCASGEYLEMKNQVCSKCGEGTYSLGSGIKFDEWDELPAGFSNIATFMDTVVGPSDSRPDGCNNSSWIPRGNYIESNRDDCTVSLIYAVHLKKSGYVFFEYQYVDNNIFFEFFIQNDQCQEMDTTTDKWVKLTDNGEWGSHSVMLKSGTNILYWRTTGILMGSKAVKPVLVKNITIEGVAYTSECFPCKPGTFSNKPGSFNCQVCPRNTYSEKGAKECIRCKDDSQFSEEGSSECTERPPCTTKDYFQIHTPCDEEGKTQIMYKWIEPKICREDLTDAIRLPPSGEKKDCPPCNPGFYNNGSSSCHPCPPGTFSDGTKECRPCPAGTEPALGFEYKWWNVLPGNMKTSCFNVGNSKCDGMNGWEVAGDHIQSGAGGSDNDYLILNLHIPGFKPPTSMTGATGSELGRITFVFETLCSADCVLYFMVDINRKSTNVVESWGGTKEKQAYTHIIFKNATFTFTWAFQRTNQGQDNRRFINDMVKIYSITATNAVDGVASSCRACALGSEQSGSSCVPCPPGHYIEKETNQCKECPPDTYLSIHQVYGKEACIPCGPGSKNNQDHSVCYSDCFFYHEKENQSLHYDFSNLSSVGSLMNGPSFTSKGTKYFHFFNISLCGHEGKKMALCTNNITDFTVKEIVAGSDDYTNLVGAFVCQSTIIPSESKGFRAALSSQSIILADTFIGVTVETTLKNINIKEDMFPVPTSQIPDVHFFYKSSTATTSCINGRSTAVKMRCNPTKSGAGVISVPSKCPAGTCDGCTFYFLWESAEACPLCTEHDFHEIEGACKRGFQETLYVWNEPKWCIKGISLPEKKLATCETVDFWLKVGAGVGAFTAVLLVALTCYFWKKNQKLEYKYSKLVMTTNSKECELPAADSCAIMEGEDNEEEVVYSNKQSLLGKLKSLATKEKEDHFESVQLKTSRSPNI.

Positions 1-47 (MLFRARGPVRGRGWGRPAEAPRRGRSPPWSPAWICCWALAGCQAAWA) are cleaved as a signal peptide. Over 48-929 (GDLPSSSSRP…TCETVDFWLK (882 aa)) the chain is Extracellular. Residue Asn169 is glycosylated (N-linked (GlcNAc...) asparagine). Cystine bridges form between Cys293–Cys310, Cys323–Cys346, and Cys326–Cys358. Residues Asn405 and Asn691 are each glycosylated (N-linked (GlcNAc...) asparagine). Residues 672-877 (SDCFFYHEKE…LWESAEACPL (206 aa)) form the MRH domain. 4 disulfides stabilise this stretch: Cys674-Cys720, Cys730-Cys758, Cys827-Cys863, and Cys839-Cys875. Residues 930–950 (VGAGVGAFTAVLLVALTCYFW) form a helical membrane-spanning segment. The Cytoplasmic portion of the chain corresponds to 951–1029 (KKNQKLEYKY…QLKTSRSPNI (79 aa)). At Ser1018 the chain carries Phosphoserine.

The protein belongs to the ELAPOR family.

The protein localises to the cell membrane. Its function is as follows. Functions as a regulator of the BMP signaling pathway and may be involved in epidermal differentiation. In Homo sapiens (Human), this protein is Endosome/lysosome-associated apoptosis and autophagy regulator family member 2.